Reading from the N-terminus, the 28-residue chain is U15-ctenitoxin-Co1a (28 aa).

2 cysteine pairs are disulfide-bonded: C3–C17 and C10–C22.

In terms of tissue distribution, expressed by the venom gland.

The protein resides in the secreted. Insecticidal neurotoxin that reversibly inhibits the N-methyl-D-aspartate (NMDA)-subtype of ionotropic glutamate receptor (GRIN) and inhibits inactivation of insect sodium channels (Nav). In vivo, is highly toxic to insects. The chain is U15-ctenitoxin-Co1a from Ctenus ornatus (Brazilian spider).